The following is a 514-amino-acid chain: Type-2 serine--tRNA ligase (514 aa).

Alanine 313 serves as a coordination point for L-serine. Cysteine 315 provides a ligand contact to Zn(2+). An L-serine-binding site is contributed by arginine 344. ATP is bound by residues 344–346 and 355–356; these read RWE and RV. Residue 361 to 363 coordinates L-serine; sequence RGE. Glutamate 363 and cysteine 470 together coordinate Zn(2+). Arginine 477 is an ATP binding site.

This sequence belongs to the class-II aminoacyl-tRNA synthetase family. Type-2 seryl-tRNA synthetase subfamily. In terms of assembly, homodimer. Zn(2+) serves as cofactor.

The protein localises to the cytoplasm. The enzyme catalyses tRNA(Ser) + L-serine + ATP = L-seryl-tRNA(Ser) + AMP + diphosphate + H(+). It catalyses the reaction tRNA(Sec) + L-serine + ATP = L-seryl-tRNA(Sec) + AMP + diphosphate + H(+). Its pathway is aminoacyl-tRNA biosynthesis; selenocysteinyl-tRNA(Sec) biosynthesis; L-seryl-tRNA(Sec) from L-serine and tRNA(Sec): step 1/1. In terms of biological role, catalyzes the attachment of serine to tRNA(Ser). Is also able to aminoacylate tRNA(Sec) with serine, to form the misacylated tRNA L-seryl-tRNA(Sec), which will be further converted into selenocysteinyl-tRNA(Sec). The polypeptide is Type-2 serine--tRNA ligase (Methanococcus maripaludis (strain C6 / ATCC BAA-1332)).